Reading from the N-terminus, the 117-residue chain is Probable non-functional immunoglobulin heavy variable 7-81 (117 aa).

Residues 1–19 (MDWTWSILFLVAAATGTYS) form the signal peptide. The segment at 20 to 44 (QVQLVQSGHEVKQPGASVKVSCKAS) is framework-1. Residues 20–117 (QVQLVQSGHE…EDMAMYYCAR (98 aa)) form the Ig-like domain. Cysteine 41 and cysteine 115 are joined by a disulfide. The complementarity-determining-1 stretch occupies residues 45–52 (GYSFTTYG). Residues 53–69 (MNWVPQAPGQGLEWMGW) are framework-2. The tract at residues 70 to 77 (FNTYTGNP) is complementarity-determining-2. Residue asparagine 76 is glycosylated (N-linked (GlcNAc...) asparagine). The segment at 78–115 (TYAQGFTGRFVFSMDTSASTAYLQISSLKAEDMAMYYC) is framework-3. The interval 116–117 (AR) is complementarity-determining-3.

As to quaternary structure, immunoglobulins are composed of two identical heavy chains and two identical light chains; disulfide-linked.

The protein localises to the secreted. The protein resides in the cell membrane. Probable non-functional open reading frame (ORF) of V region of the variable domain of immunoglobulin heavy chains. Non-functional ORF generally cannot participate in the synthesis of a productive immunoglobulin chain due to altered V-(D)-J or switch recombination and/or splicing site (at mRNA level) and/or conserved amino acid change (protein level). Immunoglobulins, also known as antibodies, are membrane-bound or secreted glycoproteins produced by B lymphocytes. In the recognition phase of humoral immunity, the membrane-bound immunoglobulins serve as receptors which, upon binding of a specific antigen, trigger the clonal expansion and differentiation of B lymphocytes into immunoglobulins-secreting plasma cells. Secreted immunoglobulins mediate the effector phase of humoral immunity, which results in the elimination of bound antigens. The antigen binding site is formed by the variable domain of one heavy chain, together with that of its associated light chain. Thus, each immunoglobulin has two antigen binding sites with remarkable affinity for a particular antigen. The variable domains are assembled by a process called V-(D)-J rearrangement and can then be subjected to somatic hypermutations which, after exposure to antigen and selection, allow affinity maturation for a particular antigen. In Homo sapiens (Human), this protein is Probable non-functional immunoglobulin heavy variable 7-81.